A 410-amino-acid polypeptide reads, in one-letter code: Multidrug resistance protein MdtM (410 aa).

Residues 1 to 11 (MPRFFTRHAAT) are Cytoplasmic-facing. Residues 12–32 (LFFPMALILYDFAAYLSTDLI) traverse the membrane as a helical segment. At 33-48 (QPGIINVVRDFNADVS) the chain is on the periplasmic side. A helical transmembrane segment spans residues 49-69 (LAPAAVSLYLAGGMALQWLLG). The Cytoplasmic portion of the chain corresponds to 70-78 (PLSDRIGRR). A helical membrane pass occupies residues 79–99 (PVLITGALIFTLACAATMFTT). Residues 100–103 (SMTQ) are Periplasmic-facing. The helical transmembrane segment at 104–124 (FLIARAIQGTSICFIATVGYV) threads the bilayer. Over 125–140 (TVQEAFGQTKGIKLMA) the chain is Cytoplasmic. The helical transmembrane segment at 141–161 (IITSIVLIAPIIGPLSGAALM) threads the bilayer. Residues 162 to 167 (HFMHWK) lie on the Periplasmic side of the membrane. Residues 168 to 188 (VLFAIIAVMGFISFVGLLLAM) traverse the membrane as a helical segment. Residues 189-216 (PETVKRGAVPFSAKSVLRDFRNVFCNRL) lie on the Cytoplasmic side of the membrane. Residues 217-237 (FLFGAATISLSYIPMMSWVAV) form a helical membrane-spanning segment. The Periplasmic portion of the chain corresponds to 238 to 251 (SPVILIDAGSLTTS). A helical membrane pass occupies residues 252-272 (QFAWTQVPVFGAVIVANAIVA). Residues 273 to 282 (RFVKDPTEPR) lie on the Cytoplasmic side of the membrane. Residues 283-303 (FIWRAVPIQLVGLSLLIVGNL) traverse the membrane as a helical segment. The Periplasmic segment spans residues 304-307 (LSPH). The chain crosses the membrane as a helical span at residues 308–328 (VWLWSVLGTSLYAFGIGLIFP). The Cytoplasmic portion of the chain corresponds to 329–348 (TLFRFTLFSNKLPKGTVSAS). A helical transmembrane segment spans residues 349–369 (LNMVILMVMSVSVEIGRWLWF). Residues 370-373 (NGGR) lie on the Periplasmic side of the membrane. A helical membrane pass occupies residues 374-394 (LPFHLLAVVAGVIVVFTLAGL). The Cytoplasmic segment spans residues 395-410 (LNRVRQHQAAELVEEQ).

This sequence belongs to the major facilitator superfamily. Monomer.

It localises to the cell inner membrane. The enzyme catalyses Na(+)(in) + 2 H(+)(out) = Na(+)(out) + 2 H(+)(in). The catalysed reaction is K(+)(in) + H(+)(out) = K(+)(out) + H(+)(in). Its activity is regulated as follows. Efflux is inhibited by the ionophore carbonyl cyanide 3-chlorophenylhydrazone (CCCP). In terms of biological role, proton-dependent efflux pump. Confers resistance to a broad spectrum of chemically unrelated substrates. Overexpression confers resistance to acriflavine, chloramphenicol, norfloxacin, ethidium bromide and tetraphenylphosphonium bromide (TPP). Can also export a broad range of quaternary ammonium compounds (QACs) and contribute to the intrinsic resistance of E.coli to these antimicrobial compounds. In addition to its role in multidrug resistance, MdtM likely plays a physiological role in alkaline pH homeostasis and in resistance to bile salts. May function in alkaline pH homeostasis when millimolar concentrations of sodium or potassium are present in the growth medium. When overexpressed, can confer a tolerance to alkaline pH values up to 9.75. Probably acts as a low-affinity antiporter that catalyzes the exchange of internal Na(+) and K(+) cations for extracellular protons to maintain a stable internal pH, acid relative to outside, during exposure to alkaline environments. Can also catalyze Rb(+)/H(+) and Li(+)/H(+) antiport, but not Ca(2+)/H(+) exchange. The exact stoichiometry of antiport is unknown. Finally, it could contribute to bile salt resistance by catalyzing the transport of bile salts out of the cell cytoplasm. Mediates a bile salt/H(+) exchange driven by the electrochemical gradient. Binds to cholate and deoxycholate with micromolar affinity and catalyzes both cholate/H(+) and deoxycholate/H(+) exchange reactions. This is Multidrug resistance protein MdtM from Escherichia coli (strain K12).